The chain runs to 246 residues: Bis(5'-nucleosyl)-tetraphosphatase PrpE [asymmetrical] (246 aa).

This sequence belongs to the PrpE family. It depends on Ni(2+) as a cofactor.

It catalyses the reaction P(1),P(4)-bis(5'-guanosyl) tetraphosphate + H2O = GMP + GTP + 2 H(+). In terms of biological role, asymmetrically hydrolyzes Ap4p to yield AMP and ATP. This Bacillus cereus (strain B4264) protein is Bis(5'-nucleosyl)-tetraphosphatase PrpE [asymmetrical].